The primary structure comprises 229 residues: Cytosolic-abundant heat soluble protein 107838 (229 aa).

Residues 1-29 form a disordered region; the sequence is MSAEAMNMNMNQDAVFIPPPEGEQYERKE. Residues 109-145 are a coiled coil; it reads LSANYQKEVERKTEAYRKQQEVEADKIRKELEKQHLR. CAHS motif stretches follow at residues 124 to 142 and 161 to 179; these read YRKQ…LEKQ and QKKM…MDRE. Residues 202-218 show a composition bias toward polar residues; it reads SSAAGTETGGQVVSESQ. The interval 202–229 is disordered; it reads SSAAGTETGGQVVSESQKFTERNRQIKQ. Residues 219–229 are compositionally biased toward basic and acidic residues; that stretch reads KFTERNRQIKQ.

Belongs to the Cytosolic-abundant heat soluble protein (CAHS) family.

Its subcellular location is the cytoplasm. In terms of biological role, CAHS proteins are cytosolic heat soluble proteins that seem to contribute to the anhydrobiosis in tardigrades, but their specific mechanisms are yet to be identified. It is possible that protection during anhydrobiosis might occur via the stabilization of vitrifying small molecules such as sugars, but not via the direct glass transition of CAHS proteins themselves. The sequence is that of Cytosolic-abundant heat soluble protein 107838 from Paramacrobiotus richtersi (Water bear).